We begin with the raw amino-acid sequence, 340 residues long: Sulfotransferase ppzF (340 aa).

It participates in secondary metabolite biosynthesis. Its function is as follows. Sulfotransferase; part of the gene cluster that mediates the biosynthesis of pyrrolopyrazines, secondary metabolites showing insecticidal activity. The role of ppzF within the pathway has still to be determined. The single multifunctional NRPS ppzA is sufficient to produce peramine via condensation of 1-pyrroline-5-carboxylate and arginine, N-methylation of the alpha-amino group of arginine and reduction of the thioester and the cyclization to form an iminium ion resulting in release from the peptide synthetase. Deprotonation of this intermediate and oxidation of the pyrroline ring would give rise to peramine. In Epichloe species that produce only peramine, the peramine synthetase gene is not localized in a gene cluster, in contrast to Metarhizium species that contain additional pyrrolopyrazine biosynthesis genes. The 2-oxoglutarate-Fe(II) type oxidoreductase ppzC hydroxylates peramine to yield the newly identified compound 8-hydroxyperamine whereas ppzD converts L-proline into trans-4-hydroxy-L-proline, a precursor of peramine biosynthesis. The polypeptide is Sulfotransferase ppzF (Metarhizium majus (strain ARSEF 297)).